We begin with the raw amino-acid sequence, 377 residues long: Mitogen-activated protein kinase mpkC (377 aa).

In terms of domain architecture, Protein kinase spans 20-299 (YVNPQPIGMG…AQDALRHPYL (280 aa)). Residues 26–34 (IGMGSFGLV) and Lys-49 contribute to the ATP site. Asp-141 serves as the catalytic Proton acceptor. The residue at position 171 (Thr-171) is a Phosphothreonine. Positions 171-173 (TGY) match the TXY motif. Residue Tyr-173 is modified to Phosphotyrosine.

This sequence belongs to the protein kinase superfamily. Ser/Thr protein kinase family. MAP kinase subfamily. HOG1 sub-subfamily. Requires Mg(2+) as cofactor. Post-translationally, dually phosphorylated on Thr-171 and Tyr-173, which activates the enzyme.

The catalysed reaction is L-seryl-[protein] + ATP = O-phospho-L-seryl-[protein] + ADP + H(+). It catalyses the reaction L-threonyl-[protein] + ATP = O-phospho-L-threonyl-[protein] + ADP + H(+). Activated by tyrosine and threonine phosphorylation. Its function is as follows. Mitogen-activated protein kinase required for growth on media where sorbitol or mannitol is the sole carbon source. The sequence is that of Mitogen-activated protein kinase mpkC (mpkc) from Neosartorya fischeri (strain ATCC 1020 / DSM 3700 / CBS 544.65 / FGSC A1164 / JCM 1740 / NRRL 181 / WB 181) (Aspergillus fischerianus).